We begin with the raw amino-acid sequence, 134 residues long: Interleukin-5 (134 aa).

Residues M1–A21 form the signal peptide. 2 N-linked (GlcNAc...) asparagine glycosylation sites follow: N76 and N90.

It belongs to the IL-5 family. In terms of assembly, homodimer; disulfide-linked. Interacts with IL5RA. Interacts with CSF2RB.

Its subcellular location is the secreted. Functionally, homodimeric cytokine expressed predominantly by T-lymphocytes and NK cells that plays an important role in the survival, differentiation, and chemotaxis of eosinophils. Also acts on activated and resting B-cells to induce immunoglobulin production, growth, and differentiation. Mechanistically, exerts its biological effects through a receptor composed of IL5RA subunit and the cytokine receptor common subunit beta/CSF2RB. Binding to the receptor leads to activation of various kinases including LYN, SYK and JAK2 and thereby propagates signals through the RAS-MAPK and JAK-STAT5 pathways respectively. This is Interleukin-5 (IL5) from Canis lupus familiaris (Dog).